A 281-amino-acid polypeptide reads, in one-letter code: Protein NipSnap homolog 2 (281 aa).

Residues 1–27 constitute a mitochondrion transit peptide; sequence MAARVLLARGGLLRPAAQSAFLPGLRT.

This sequence belongs to the NipSnap family. In terms of assembly, interacts with CALCOCO2/NDP52, NBR1, SQSTM1/p62, TAX1BP1 and WDFY3/ALFY. Interacts with ATG8 family proteins (MAP1LC3A, MAP1LC3B, MAP1LC3C, GABARAP, GABARAPL1 and GABARAPL2). Interacts with VDAC1.

The protein localises to the mitochondrion matrix. Its subcellular location is the cytoplasm. Protein involved in mitophagy by facilitating recruitment of the autophagy machinery required for clearance of damaged mitochondria. Accumulates on the mitochondria surface in response to mitochondrial depolarization and acts as a 'eat me' signal by recruiting proteins involved in selective autophagy, such as autophagy receptors (CALCOCO2/NDP52, NBR1, SQSTM1/p62, TAX1BP1 and WDFY3/ALFY) and ATG8 family proteins (MAP1LC3A, MAP1LC3B, MAP1LC3C, GABARAP, GABARAPL1 and GABARAPL2). May act as a positive regulator of L-type calcium channels. The protein is Protein NipSnap homolog 2 of Mus musculus (Mouse).